Consider the following 390-residue polypeptide: Chorismate synthase (390 aa).

Arg-48 and Arg-54 together coordinate NADP(+). FMN is bound by residues 125 to 127 (RSS), 238 to 239 (NA), Gly-278, 293 to 297 (KPTSS), and Arg-319. The interval 359–390 (PRIPGSTTNQIHPVEMQASAPRAEDPEPDESS) is disordered.

Belongs to the chorismate synthase family. Homotetramer. It depends on FMNH2 as a cofactor.

It catalyses the reaction 5-O-(1-carboxyvinyl)-3-phosphoshikimate = chorismate + phosphate. The protein operates within metabolic intermediate biosynthesis; chorismate biosynthesis; chorismate from D-erythrose 4-phosphate and phosphoenolpyruvate: step 7/7. Functionally, catalyzes the anti-1,4-elimination of the C-3 phosphate and the C-6 proR hydrogen from 5-enolpyruvylshikimate-3-phosphate (EPSP) to yield chorismate, which is the branch point compound that serves as the starting substrate for the three terminal pathways of aromatic amino acid biosynthesis. This reaction introduces a second double bond into the aromatic ring system. The protein is Chorismate synthase of Nitrosomonas europaea (strain ATCC 19718 / CIP 103999 / KCTC 2705 / NBRC 14298).